The sequence spans 178 residues: Histone deacetylase complex subunit SAP30L (178 aa).

2 disulfide bridges follow: Cys24–Cys25 and Cys33–Cys69. The Atypical zinc-finger motif lies at 24-72; the sequence is CCLIEDAERCGRPAGNASFSKRIQKSISQRKLKLDIDKSVRHLYICDFH. The disordered stretch occupies residues 80–99; sequence RNKRKRKTSDDGGESPDHEV. Positions 81-86 match the Nuclear localization signal (NLS) motif; it reads NKRKRK. Positions 83-85 are important for DNA and phosphoinositide binding; the sequence is RKR.

Belongs to the SAP30 family. Interacts with components of the histone deacetylase complex sin3a, hdac1 and hdac2. Binds histones and nucleosomes. As to expression, detected in embryos at 2dpf (at protein level). Widely expressed during embryogenesis and in adults.

It localises to the nucleus. Its subcellular location is the nucleolus. Functions as a transcription repressor, probably via its interaction with histone deacetylase complexes. Required for normal expression of numerous target genes. Involved in the functional recruitment of the class 1 Sin3-histone deacetylase complex (HDAC) to the nucleolus. Binds DNA, apparently without sequence-specificity, and bends bound double-stranded DNA. Binds phosphoinositol phosphates (phosphoinositol 3-phosphate, phosphoinositol 4-phosphate and phosphoinositol 5-phosphate) via the same basic sequence motif that mediates DNA binding and nuclear import. In Danio rerio (Zebrafish), this protein is Histone deacetylase complex subunit SAP30L (sap30l).